Consider the following 426-residue polypeptide: 3-phosphoshikimate 1-carboxyvinyltransferase (426 aa).

3-phosphoshikimate-binding residues include Lys-22, Ser-23, and Arg-27. Lys-22 provides a ligand contact to phosphoenolpyruvate. Residues Gly-96 and Arg-124 each coordinate phosphoenolpyruvate. Positions 170, 171, 172, 198, 314, 337, and 341 each coordinate 3-phosphoshikimate. Gln-172 lines the phosphoenolpyruvate pocket. The active-site Proton acceptor is the Asp-314. The phosphoenolpyruvate site is built by Arg-345, Arg-387, and Lys-412.

The protein belongs to the EPSP synthase family. As to quaternary structure, monomer.

The protein resides in the cytoplasm. The catalysed reaction is 3-phosphoshikimate + phosphoenolpyruvate = 5-O-(1-carboxyvinyl)-3-phosphoshikimate + phosphate. It participates in metabolic intermediate biosynthesis; chorismate biosynthesis; chorismate from D-erythrose 4-phosphate and phosphoenolpyruvate: step 6/7. Its function is as follows. Catalyzes the transfer of the enolpyruvyl moiety of phosphoenolpyruvate (PEP) to the 5-hydroxyl of shikimate-3-phosphate (S3P) to produce enolpyruvyl shikimate-3-phosphate and inorganic phosphate. The sequence is that of 3-phosphoshikimate 1-carboxyvinyltransferase from Shewanella halifaxensis (strain HAW-EB4).